We begin with the raw amino-acid sequence, 68 residues long: Large ribosomal subunit protein bL35 (68 aa).

Belongs to the bacterial ribosomal protein bL35 family.

The chain is Large ribosomal subunit protein bL35 from Rickettsia akari (strain Hartford).